The chain runs to 216 residues: Adenylate kinase (216 aa).

10–15 provides a ligand contact to ATP; the sequence is GAGKGT. The tract at residues 30–59 is NMP; sequence STGDMLRAAVKAGTELGIKAKSIMDAGGLV. AMP is bound by residues Thr31, Arg36, 57 to 59, 85 to 88, and Gln92; these read GLV and GFPR. The interval 122–159 is LID; that stretch reads GRRVHEASGRVYHIVYNPPKIAGKDDITGEELVQRKDD. ATP is bound by residues Arg123 and 132–133; that span reads VY. Residues Arg156 and Arg167 each coordinate AMP. Gly202 provides a ligand contact to ATP.

This sequence belongs to the adenylate kinase family. In terms of assembly, monomer.

The protein resides in the cytoplasm. It catalyses the reaction AMP + ATP = 2 ADP. It functions in the pathway purine metabolism; AMP biosynthesis via salvage pathway; AMP from ADP: step 1/1. Functionally, catalyzes the reversible transfer of the terminal phosphate group between ATP and AMP. Plays an important role in cellular energy homeostasis and in adenine nucleotide metabolism. This chain is Adenylate kinase, found in Pseudomonas fluorescens (strain Pf0-1).